Here is a 572-residue protein sequence, read N- to C-terminus: Thiamine biosynthesis protein THI22 (572 aa).

An N-terminal signal peptide occupies residues 1–19 (MVIILLGLCTLGFPRTAFC).

Belongs to the thiaminase-2 family.

It is found in the secreted. Its function is as follows. Is not required for thiamine biosynthesis. In Saccharomyces cerevisiae (strain ATCC 204508 / S288c) (Baker's yeast), this protein is Thiamine biosynthesis protein THI22 (THI22).